Consider the following 198-residue polypeptide: dTTP/UTP pyrophosphatase (198 aa).

Aspartate 78 functions as the Proton acceptor in the catalytic mechanism.

The protein belongs to the Maf family. YhdE subfamily. Requires a divalent metal cation as cofactor.

Its subcellular location is the cytoplasm. The enzyme catalyses dTTP + H2O = dTMP + diphosphate + H(+). The catalysed reaction is UTP + H2O = UMP + diphosphate + H(+). Functionally, nucleoside triphosphate pyrophosphatase that hydrolyzes dTTP and UTP. May have a dual role in cell division arrest and in preventing the incorporation of modified nucleotides into cellular nucleic acids. The chain is dTTP/UTP pyrophosphatase from Chromobacterium violaceum (strain ATCC 12472 / DSM 30191 / JCM 1249 / CCUG 213 / NBRC 12614 / NCIMB 9131 / NCTC 9757 / MK).